A 146-amino-acid polypeptide reads, in one-letter code: Protein MGF 100-3L (146 aa).

This sequence belongs to the asfivirus MGF 100 family.

In terms of biological role, plays a role in virus cell tropism, and may be required for efficient virus replication in macrophages. The sequence is that of Protein MGF 100-3L from Ornithodoros (relapsing fever ticks).